The chain runs to 986 residues: Bifunctional glutamine synthetase adenylyltransferase/adenylyl-removing enzyme (986 aa).

Residues 1–482 (MVTTVISNVK…RYGRLFAGEE (482 aa)) are adenylyl removase. The adenylyl transferase stretch occupies residues 486-986 (SRFGSLVFTG…RAAYEAVVKG (501 aa)).

The protein belongs to the GlnE family. Requires Mg(2+) as cofactor.

It catalyses the reaction [glutamine synthetase]-O(4)-(5'-adenylyl)-L-tyrosine + phosphate = [glutamine synthetase]-L-tyrosine + ADP. It carries out the reaction [glutamine synthetase]-L-tyrosine + ATP = [glutamine synthetase]-O(4)-(5'-adenylyl)-L-tyrosine + diphosphate. Involved in the regulation of glutamine synthetase GlnA, a key enzyme in the process to assimilate ammonia. When cellular nitrogen levels are high, the C-terminal adenylyl transferase (AT) inactivates GlnA by covalent transfer of an adenylyl group from ATP to specific tyrosine residue of GlnA, thus reducing its activity. Conversely, when nitrogen levels are low, the N-terminal adenylyl removase (AR) activates GlnA by removing the adenylyl group by phosphorolysis, increasing its activity. The regulatory region of GlnE binds the signal transduction protein PII (GlnB) which indicates the nitrogen status of the cell. In Caulobacter vibrioides (strain ATCC 19089 / CIP 103742 / CB 15) (Caulobacter crescentus), this protein is Bifunctional glutamine synthetase adenylyltransferase/adenylyl-removing enzyme.